The chain runs to 225 residues: Methyl-CpG-binding domain-containing protein 6 (225 aa).

The interval 25 to 92 is disordered; the sequence is GDGTLDSSAK…PGWRVEDKIR (68 aa). The 76-residue stretch at 71 to 146 folds into the MBD domain; it reads RKRAAPGDNW…ENTYFNPDHF (76 aa).

In terms of assembly, homodimer and heterodimer with MBD5. Interacts with DDM1 via its MBD domain. Interacts with NTF2, RPS2C, HDA6 and AGO4. As to expression, expressed in rosette leaves, buds, flowers, stems, mature seeds and roots.

It localises to the nucleus. It is found in the chromosome. Its subcellular location is the nucleolus. In terms of biological role, transcriptional regulator that binds CpG, CpNpN and CpNpG (N is A, T, or C) islands in promoters regardless the DNA methylation status. Plays probably a role in gene silencing. May associate with histone deacetylase proteins (HDAC). Required for nucleolar dominance that consist in the silencing of rRNA genes inherited from one progenitor in genetic hybrids. Recruited to rRNA genes in a DRM2-dependent manner. Maintains gene silencing by interacting with RNA binding proteins (e.g. NTF2, RPS2C, HDA6 and AGO4) and by regulating DNA methylation status. This chain is Methyl-CpG-binding domain-containing protein 6, found in Arabidopsis thaliana (Mouse-ear cress).